Here is a 145-residue protein sequence, read N- to C-terminus: UPF0260 protein VS_0923 (145 aa).

Belongs to the UPF0260 family.

The chain is UPF0260 protein VS_0923 from Vibrio atlanticus (strain LGP32) (Vibrio splendidus (strain Mel32)).